The sequence spans 892 residues: Translation initiation factor IF-2 (892 aa).

The segment at 88–305 (KKRTFVKRDP…SLQQGFQKPA (218 aa)) is disordered. Basic and acidic residues-rich tracts occupy residues 93–159 (VKRD…KDKV) and 166–216 (DMTK…EENK). The segment covering 254–269 (GRGRNAKAARPAKKGK) has biased composition (basic residues). The segment covering 270-282 (HAESKADREEARA) has biased composition (basic and acidic residues). In terms of domain architecture, tr-type G spans 391–560 (PRAPVVTIMG…LLQAEVLELK (170 aa)). The interval 400-407 (GHVDHGKT) is G1. 400–407 (GHVDHGKT) provides a ligand contact to GTP. The interval 425 to 429 (GITQH) is G2. A G3 region spans residues 446–449 (DTPG). GTP is bound by residues 446 to 450 (DTPGH) and 500 to 503 (NKID). Residues 500–503 (NKID) form a G4 region. A G5 region spans residues 536-538 (SAK).

Belongs to the TRAFAC class translation factor GTPase superfamily. Classic translation factor GTPase family. IF-2 subfamily.

The protein localises to the cytoplasm. Functionally, one of the essential components for the initiation of protein synthesis. Protects formylmethionyl-tRNA from spontaneous hydrolysis and promotes its binding to the 30S ribosomal subunits. Also involved in the hydrolysis of GTP during the formation of the 70S ribosomal complex. The sequence is that of Translation initiation factor IF-2 from Salmonella agona (strain SL483).